The following is a 252-amino-acid chain: tRNA pseudouridine synthase A (252 aa).

Aspartate 52 acts as the Nucleophile in catalysis. A substrate-binding site is contributed by tyrosine 111.

Belongs to the tRNA pseudouridine synthase TruA family. In terms of assembly, homodimer.

The catalysed reaction is uridine(38/39/40) in tRNA = pseudouridine(38/39/40) in tRNA. Its function is as follows. Formation of pseudouridine at positions 38, 39 and 40 in the anticodon stem and loop of transfer RNAs. The polypeptide is tRNA pseudouridine synthase A (Methylorubrum populi (strain ATCC BAA-705 / NCIMB 13946 / BJ001) (Methylobacterium populi)).